Reading from the N-terminus, the 199-residue chain is Putative 3-methyladenine DNA glycosylase (199 aa).

Belongs to the DNA glycosylase MPG family.

In Rhizobium etli (strain ATCC 51251 / DSM 11541 / JCM 21823 / NBRC 15573 / CFN 42), this protein is Putative 3-methyladenine DNA glycosylase.